Consider the following 248-residue polypeptide: Triosephosphate isomerase (248 aa).

Asparagine 9–lysine 11 contacts substrate. The active-site Electrophile is the histidine 94. The active-site Proton acceptor is glutamate 164. Substrate is bound by residues glycine 170, serine 209, and glycine 230–glycine 231.

The protein belongs to the triosephosphate isomerase family. In terms of assembly, homodimer.

The protein localises to the cytoplasm. The enzyme catalyses D-glyceraldehyde 3-phosphate = dihydroxyacetone phosphate. Its pathway is carbohydrate biosynthesis; gluconeogenesis. It functions in the pathway carbohydrate degradation; glycolysis; D-glyceraldehyde 3-phosphate from glycerone phosphate: step 1/1. In terms of biological role, involved in the gluconeogenesis. Catalyzes stereospecifically the conversion of dihydroxyacetone phosphate (DHAP) to D-glyceraldehyde-3-phosphate (G3P). This is Triosephosphate isomerase from Hahella chejuensis (strain KCTC 2396).